Reading from the N-terminus, the 488-residue chain is Sterol 14-demethylase (488 aa).

A helical membrane pass occupies residues 12–32 (TGLVIVATLVIAKLIFSFFTS). Residue cysteine 433 participates in heme binding.

Belongs to the cytochrome P450 family. Heme is required as a cofactor. As to expression, expressed in leaves, roots, stems, siliques, flowers, flower buds and seedlings.

It is found in the membrane. It catalyses the reaction a 14alpha-methyl steroid + 3 reduced [NADPH--hemoprotein reductase] + 3 O2 = a Delta(14) steroid + formate + 3 oxidized [NADPH--hemoprotein reductase] + 4 H2O + 4 H(+). Its function is as follows. Involved in sterol biosynthesis. Catalyzes the 14-alpha demethylation of obtusifoliol to 4 alpha-methyl-5 alpha-ergosta-8,14,24(28)-trien-3 beta-ol. The protein is Sterol 14-demethylase (CYP51G1) of Arabidopsis thaliana (Mouse-ear cress).